A 156-amino-acid chain; its full sequence is MRRRKAPVREVLPDPIYGNKVITKFINSLMYDGKKSTATTIMYGALEAIDKKGGEKKGIDIFNDAIENIKPLLEVKSRRVGGATYQVPVEVRPARQQALAIRWIISFARKRSERTMIDKLAAELLDAANSKGASFKKKEDTYKMAEANKAFAHYRW.

It belongs to the universal ribosomal protein uS7 family. Part of the 30S ribosomal subunit. Contacts proteins S9 and S11.

Functionally, one of the primary rRNA binding proteins, it binds directly to 16S rRNA where it nucleates assembly of the head domain of the 30S subunit. Is located at the subunit interface close to the decoding center, probably blocks exit of the E-site tRNA. In Campylobacter jejuni subsp. jejuni serotype O:6 (strain 81116 / NCTC 11828), this protein is Small ribosomal subunit protein uS7.